The sequence spans 638 residues: ATP-dependent rRNA helicase spb4 (638 aa).

The Q motif signature appears at 14-42; it reads WDAVNPPLSEWVLDAVSSMGFTRMTPVQA. A Helicase ATP-binding domain is found at 45–249; that stretch reads IPLFMAHKDV…RVGLRNPVKV (205 aa). 58-65 serves as a coordination point for ATP; sequence AVTGSGKT. The DEAD box signature appears at 197 to 200; the sequence is DEAD. The Helicase C-terminal domain occupies 283-437; the sequence is ALKHILNSVQ…PITVSDAEAA (155 aa). A coiled-coil region spans residues 521 to 629; the sequence is AYKDKQREKR…AKADKDAEEG (109 aa). Residues 538–638 are disordered; that stretch reads MAESGQQQTT…GGDEEFTGFD (101 aa). Residues 574–597 are compositionally biased toward basic and acidic residues; sequence MKQVRQERKRWEKMTEEEKKKALE. A compositionally biased stretch (acidic residues) spans 625-638; it reads DAEEGGDEEFTGFD.

This sequence belongs to the DEAD box helicase family. DDX55/SPB4 subfamily. As to quaternary structure, component of pre-60S ribosomal complexes.

The protein localises to the nucleus. Its subcellular location is the nucleolus. It carries out the reaction ATP + H2O = ADP + phosphate + H(+). In terms of biological role, ATP-binding RNA helicase involved in the biogenesis of 60S ribosomal subunits. Binds 90S pre-ribosomal particles and dissociates from pre-60S ribosomal particles after processing of 27SB pre-rRNA. Required for the normal formation of 18S rRNA through the processing of pre-rRNAs at sites A0, A1 and A2, and the normal formation of 25S and 5.8S rRNAs through the processing of pre-rRNAs at sites C1 and C2. The sequence is that of ATP-dependent rRNA helicase spb4 from Emericella nidulans (strain FGSC A4 / ATCC 38163 / CBS 112.46 / NRRL 194 / M139) (Aspergillus nidulans).